The sequence spans 119 residues: Holo-[acyl-carrier-protein] synthase (119 aa).

Mg(2+) contacts are provided by D8 and E58.

This sequence belongs to the P-Pant transferase superfamily. AcpS family. It depends on Mg(2+) as a cofactor.

It is found in the cytoplasm. The catalysed reaction is apo-[ACP] + CoA = holo-[ACP] + adenosine 3',5'-bisphosphate + H(+). In terms of biological role, transfers the 4'-phosphopantetheine moiety from coenzyme A to a Ser of acyl-carrier-protein. The protein is Holo-[acyl-carrier-protein] synthase of Streptococcus thermophilus (strain ATCC BAA-491 / LMD-9).